The following is a 373-amino-acid chain: MSEKKINLLDLDRKAMRALFADLGEKPFRADQLMKWIYHFGVSDFEEMTNINKVLRQKLAARCEIVAPEISSYQKSTDGTIKFAIHVGEGQEVETVYIPEDDRATLCVSSQVGCALECTFCSTAQQGFNRNLTVSEIVGQIWRVSHFLGFAKETGERPITNVVMMGMGEPLLNLANVIPAMDIMLDDFGFSLSKRRVTLSTSGVVPALDKLGDALDVALAVSIHAPNDELRDILVPVNKKYPLQEFLAGIRRYIAKSNANRGRVTVEYVMLDHINDSTEQAHELAQLMKDTPCKVNLIPFNPYPGSPYGRSSNSRIDRFSKVLMEYGLTVIVRKTRGDDIDAACGQLAGDIRDRTKRLAKKRMQENQISVTMN.

Residue Glu94 is the Proton acceptor of the active site. Residues 100–339 enclose the Radical SAM core domain; that stretch reads EDDRATLCVS…VIVRKTRGDD (240 aa). Cys107 and Cys344 are joined by a disulfide. Residues Cys114, Cys118, and Cys121 each contribute to the [4Fe-4S] cluster site. S-adenosyl-L-methionine-binding positions include 168 to 169, Ser200, 222 to 224, and Asn301; these read GE and SIH. The active-site S-methylcysteine intermediate is the Cys344.

It belongs to the radical SAM superfamily. RlmN family. It depends on [4Fe-4S] cluster as a cofactor.

It localises to the cytoplasm. It carries out the reaction adenosine(2503) in 23S rRNA + 2 reduced [2Fe-2S]-[ferredoxin] + 2 S-adenosyl-L-methionine = 2-methyladenosine(2503) in 23S rRNA + 5'-deoxyadenosine + L-methionine + 2 oxidized [2Fe-2S]-[ferredoxin] + S-adenosyl-L-homocysteine. The catalysed reaction is adenosine(37) in tRNA + 2 reduced [2Fe-2S]-[ferredoxin] + 2 S-adenosyl-L-methionine = 2-methyladenosine(37) in tRNA + 5'-deoxyadenosine + L-methionine + 2 oxidized [2Fe-2S]-[ferredoxin] + S-adenosyl-L-homocysteine. In terms of biological role, specifically methylates position 2 of adenine 2503 in 23S rRNA and position 2 of adenine 37 in tRNAs. m2A2503 modification seems to play a crucial role in the proofreading step occurring at the peptidyl transferase center and thus would serve to optimize ribosomal fidelity. This chain is Dual-specificity RNA methyltransferase RlmN, found in Shewanella sp. (strain ANA-3).